We begin with the raw amino-acid sequence, 220 residues long: MAKQEYKQLPKRAEVHSATEQFKDTVKTSLGLDLFKGLGLTIKEFFSPSVTIHYPMEQLPLSPRYRAVHNLQRLLDSGSERCIGCGLCEKICTSNCIRIITHKGEDNRKKIDSYTINLGRCIYCGLCAEVCPELAIVMGNRFENASTQRSQYGSKSEFLTSEQDAKNCSHAEFLGFGAVSPNYNERMQATPLDYVQEPSKEESQEETPTNPESNKGDENV.

2 4Fe-4S ferredoxin-type domains span residues 71 to 102 and 112 to 141; these read LQRL…IITH and DSYT…MGNR. [4Fe-4S] cluster contacts are provided by Cys-82, Cys-85, Cys-88, Cys-92, Cys-121, Cys-124, Cys-127, and Cys-131. The interval 187–220 is disordered; sequence MQATPLDYVQEPSKEESQEETPTNPESNKGDENV.

Belongs to the complex I 23 kDa subunit family. In terms of assembly, NDH-1 is composed of 14 different subunits. Subunits NuoA, H, J, K, L, M, N constitute the membrane sector of the complex. [4Fe-4S] cluster is required as a cofactor.

The protein localises to the cell inner membrane. It carries out the reaction a quinone + NADH + 5 H(+)(in) = a quinol + NAD(+) + 4 H(+)(out). Its function is as follows. NDH-1 shuttles electrons from NADH, via FMN and iron-sulfur (Fe-S) centers, to quinones in the respiratory chain. The immediate electron acceptor for the enzyme in this species is believed to be ubiquinone. Couples the redox reaction to proton translocation (for every two electrons transferred, four hydrogen ions are translocated across the cytoplasmic membrane), and thus conserves the redox energy in a proton gradient. In Helicobacter pylori (strain ATCC 700392 / 26695) (Campylobacter pylori), this protein is NADH-quinone oxidoreductase subunit I.